Consider the following 597-residue polypeptide: MRLFTHGQVLALLAFVNTISATPSFSTNSYPAHPAEPVSLFSQHQPQAPLGLWTRLRNSVIERVWGVPPQQRHRGGNKHQYPPFSAPASLRARYGDDVVLRFKLQTADEVKALVEASNILFLDVWSSTDEWIDIRLAKDVVPSLLGLLPKSLQTTHVPLIRDLPQTIYESYPSPSQSPSGRERGFLPSGEPSSDVTNIFFENYQPLSVIVPWMRLLASMFPSHAQFISIGSSFEGRDIPALRVGVRPANDQKPRRTLIIEGGSHAREWIGVSTVNYVAYSLITSYGKSKPISTLLEQFDFIFIPTINPDGYVYTWETDRLWRKNRQETSLPFCPGVDLDRTWGFEWNGNATGDNPCLESYGGDKPFAGVEAHQLAEWVKEQTEQRNTKFVAYMDLHSYSQQILYPYSYSCLYQPPNLENLEELAMGIAKAIRLTNRKTYAVSSACGGLMASQKKKAKPETFLRMESTGGSALDWFYHDFGVKYAYQLKLRDRGSYGFLLPRENIVPTGKEVFNAVMMLGRFLLGESNAFQELDWDAGFQRPKKDDKPILNDDDDDDADTNDDGIGRKDDSWIPDEYKGDNDRDESDGGWAFRRLRKR.

An N-terminal signal peptide occupies residues 1 to 21 (MRLFTHGQVLALLAFVNTISA). A propeptide spanning residues 22-174 (TPSFSTNSYP…QTIYESYPSP (153 aa)) is cleaved from the precursor. Residues 170-179 (SYPSPSQSPS) show a composition bias toward low complexity. Positions 170-189 (SYPSPSQSPSGRERGFLPSG) are disordered. In terms of domain architecture, Peptidase M14 spans 202 to 522 (NYQPLSVIVP…NAVMMLGRFL (321 aa)). 2 residues coordinate Zn(2+): His264 and Glu267. Residues 264–267 (HARE), Arg322, and 339–340 (DR) contribute to the substrate site. An intrachain disulfide couples Cys333 to Cys356. Asn349 carries an N-linked (GlcNAc...) asparagine glycan. His396 contacts Zn(2+). 397-398 (SY) contacts substrate. A disordered region spans residues 543-597 (KDDKPILNDDDDDDADTNDDGIGRKDDSWIPDEYKGDNDRDESDGGWAFRRLRKR). A compositionally biased stretch (acidic residues) spans 550 to 561 (NDDDDDDADTND). The span at 563-580 (GIGRKDDSWIPDEYKGDN) shows a compositional bias: basic and acidic residues.

Belongs to the peptidase M14 family. The cofactor is Zn(2+).

It localises to the vacuole. The protein resides in the secreted. Its function is as follows. Inactive carboxypeptidase that may play a role in cell wall organization and biogenesis. The sequence is that of Inactive metallocarboxypeptidase ECM14 (ECM14) from Ajellomyces capsulatus (strain G186AR / H82 / ATCC MYA-2454 / RMSCC 2432) (Darling's disease fungus).